A 65-amino-acid polypeptide reads, in one-letter code: Large ribosomal subunit protein bL33m (65 aa).

The transit peptide at 1–8 (MFLSAVTF) directs the protein to the mitochondrion.

This sequence belongs to the bacterial ribosomal protein bL33 family. As to quaternary structure, component of the mitochondrial ribosome large subunit (39S) which comprises a 16S rRNA and about 50 distinct proteins.

Its subcellular location is the mitochondrion. The polypeptide is Large ribosomal subunit protein bL33m (MRPL33) (Bos taurus (Bovine)).